Reading from the N-terminus, the 237-residue chain is uncharacterized protein (237 aa).

The 114-residue stretch at 3–116 (RILLVEDDER…VVMAKIKSVL (114 aa)) folds into the Response regulatory domain. Asp52 carries the post-translational modification 4-aspartylphosphate. Residues 131 to 229 (SRIVELGGLT…IRGQGYQFQV (99 aa)) constitute a DNA-binding region (ompR/PhoB-type).

Phosphorylated by YvcQ.

It localises to the cytoplasm. Member of the two-component regulatory system YvcQ/YvcP. This is an uncharacterized protein from Bacillus subtilis (strain 168).